The following is a 382-amino-acid chain: Sphingosine 1-phosphate receptor 1 (382 aa).

Over 1–46 (MGSTRIPLVKALHSPVSDYVNYDIIVRHYNYTGKLKISADKDNGIK) the chain is Extracellular. Residue lysine 10 is modified to N6-acetyllysine. Asparagine 30 is a glycosylation site (N-linked (GlcNAc...) asparagine). A helical transmembrane segment spans residues 47–68 (LISVVFILICCFIILENIFVLL). At 69 to 82 (TIWKTKKFHRPMYY) the chain is on the cytoplasmic side. A helical membrane pass occupies residues 83–104 (FIGNLALSDLLAGVAYTANLLL). Over 105–116 (SGATTYKLTPAQ) the chain is Extracellular. A helical membrane pass occupies residues 117 to 138 (WFLREGSMFVALSASVFSLLAI). 120–121 (RE) is a binding site for sphing-4-enine 1-phosphate. Residues 139–160 (AIERYITMLKMKLHNGSNRFRS) are Cytoplasmic-facing. A helical membrane pass occupies residues 161 to 182 (FLLISACWVISLILGGLPIMGW). Residues 183–196 (NCISTLPSCSTVLP) are Extracellular-facing. The cysteines at positions 184 and 191 are disulfide-linked. The chain crosses the membrane as a helical span at residues 197-224 (LYHKHYILFCTTVFTLLLLSIVILYCRI). Residues 225 to 257 (YSLVRTRSRRLTFRKNISKASRSSEKSLALLKT) lie on the Cytoplasmic side of the membrane. Threonine 236 is modified (phosphothreonine; by PKB/AKT1). The chain crosses the membrane as a helical span at residues 258–278 (VIIVLGVFIACWAPLFILLLL). 265-269 (FIACW) contributes to the sphing-4-enine 1-phosphate binding site. Residues 279-289 (DVGCKVKTCDI) are Extracellular-facing. Cysteine 282 and cysteine 287 form a disulfide bridge. The helical transmembrane segment at 290-310 (LFRTEYFLVLAVLNSGTNPII) threads the bilayer. Topologically, residues 311–382 (YTLSNKEMRR…MSSGNVNSSS (72 aa)) are cytoplasmic. Cysteine 328 carries S-palmitoyl cysteine lipidation. The disordered stretch occupies residues 349–382 (EFSRSKSDNSSHPQKDDGDNPETIMSSGNVNSSS). Phosphoserine occurs at positions 351 and 353. Positions 351–366 (SRSKSDNSSHPQKDDG) are enriched in basic and acidic residues. Over residues 371 to 382 (TIMSSGNVNSSS) the composition is skewed to polar residues.

Belongs to the G-protein coupled receptor 1 family. Interacts with GNAI1 and GNAI3. Interacts with CD69; this interaction promotes S1PR1 degradation. In terms of processing, S1P-induced endothelial cell migration requires the PKB/AKT1-mediated phosphorylation of the third intracellular loop at the Thr-236 residue. Palmitoylated by ZDHHC5. Palmitoylation is required for targeting to plasma membrane, enabling G(i) coupling.

It is found in the cell membrane. It localises to the endosome. Its subcellular location is the membrane raft. Functionally, G-protein coupled receptor for the bioactive lysosphingolipid sphingosine 1-phosphate (S1P) that seems to be coupled to the G(i) subclass of heteromeric G proteins. Signaling leads to the activation of RAC1, SRC, PTK2/FAK1 and MAP kinases. Plays an important role in cell migration, probably via its role in the reorganization of the actin cytoskeleton and the formation of lamellipodia in response to stimuli that increase the activity of the sphingosine kinase SPHK1. Required for normal chemotaxis toward sphingosine 1-phosphate. Required for normal embryonic heart development and normal cardiac morphogenesis. Plays an important role in the regulation of sprouting angiogenesis and vascular maturation. Inhibits sprouting angiogenesis to prevent excessive sprouting during blood vessel development. Required for normal egress of mature T-cells from the thymus into the blood stream and into peripheral lymphoid organs. Plays a role in the migration of osteoclast precursor cells, the regulation of bone mineralization and bone homeostasis. Plays a role in responses to oxidized 1-palmitoyl-2-arachidonoyl-sn-glycero-3-phosphocholine by pulmonary endothelial cells and in the protection against ventilator-induced lung injury. This chain is Sphingosine 1-phosphate receptor 1 (S1PR1), found in Bos taurus (Bovine).